We begin with the raw amino-acid sequence, 367 residues long: MSITSLLQQTTLLPEHYRALSITEMESRILSIKKKLGSKLFIPGHHYQKDEVIQFADATGDSLQLAQLSAANKEAEHIVFCGVHFMAETADMLTSKRQHVYLPDMRAGCSMADMADIYQTEQAWPILQQLFGDTITPLTYVNSTAAIKAFTGRHGGACVTSSNAKELVQWAFTQKQRIFFLPDQHLGRNTAYDLGVPLENMAVWNPHKNILETKQPIENIQVILWKGHCSVHEGFTVQHTETVRKEYPSMRIIVHPECSREVVDAADDAGSTKYIIDTINQAPSGSAWAIGTEMNLVNRIIKQHPDKQIISLNENFCPCLTMNRIDLPHLLWCLESIDHGQPHNRIQVDDHTSKEALSSLERMLARR.

Iminosuccinate is bound by residues His45 and Ser62. Residue Cys109 participates in [4Fe-4S] cluster binding. Residues 140 to 142 (YVN) and Ser161 contribute to the iminosuccinate site. Cys229 contributes to the [4Fe-4S] cluster binding site. Residues 255 to 257 (HPE) and Thr272 each bind iminosuccinate. Residue Cys319 coordinates [4Fe-4S] cluster.

Belongs to the quinolinate synthase family. Type 3 subfamily. [4Fe-4S] cluster is required as a cofactor.

Its subcellular location is the cytoplasm. It carries out the reaction iminosuccinate + dihydroxyacetone phosphate = quinolinate + phosphate + 2 H2O + H(+). The protein operates within cofactor biosynthesis; NAD(+) biosynthesis; quinolinate from iminoaspartate: step 1/1. Functionally, catalyzes the condensation of iminoaspartate with dihydroxyacetone phosphate to form quinolinate. The protein is Quinolinate synthase of Lysinibacillus sphaericus (strain C3-41).